A 711-amino-acid polypeptide reads, in one-letter code: MGDERPHYYGKHGTPQKYDPTFKGPIYNRGCTDVICCVFLLVAIVGYVAVGIIAWTHGDPRKVIYPTDSRGEFCGQEGTKNENKPYLFYFNIVKCASPLVLLEFQCPTPQICVEKCPNRYLTYLNARSSRDFEYYKQFCVPGFKNNKGVAEVLRDGDCPAVLIPSKPLVRRCFPAIHAYKGVLMVGNETTYEDGHGARKNITDLVEGAKKANGVLEARQLAMRIFEDYTVSWYWIIIGLVIAMAMSLLFIILLRFLAGIMVWVMIIMVILVLGYGIFHCYMEYSRLRGEAGSDVSLVDLGFQTDFRVYLHLRQTWLAFMIILSILEVIIILLLIFLRKRILIAIALIKEASRAVGYVMCTMLYPLVTFFLLCLCIAYWASTAVFLSTSNEAVYKIFDDGLCPFTAKTCNPETFPSSNESRQCPNARCQFAFYGGESGYHRALLGLQIFNAFMFFWLANFVLALGQVTLAGAFASYYWALRKPDDLPAFPLFSAFGRALRYHTGSLAFGALILAIVQIIRVILEYLDQRLKAAENKFAKCLMTCLKCCFWCLEKFIKFLNRNAYIMIAIYGTNFCTSARNAFFLLMRNIIRVAVLDKVTDFLFLLGKLLIVGSVGILAFFFFTHRIRIVQDTAPPLNYYWVPILTVIVGSYLIAHGFFSVYGMCVDTLFLCFCEDLERNDGSQERPYFMSPELRDILLKGSAEEGKRAEAEE.

At 1 to 33 (MGDERPHYYGKHGTPQKYDPTFKGPIYNRGCTD) the chain is on the cytoplasmic side. Threonine 14 is modified (phosphothreonine). The chain crosses the membrane as a helical span at residues 34-54 (VICCVFLLVAIVGYVAVGIIA). Residues 55-232 (WTHGDPRKVI…RIFEDYTVSW (178 aa)) lie on the Extracellular side of the membrane. Asparagine 187 and asparagine 200 each carry an N-linked (GlcNAc...) asparagine glycan. A helical transmembrane segment spans residues 233-253 (YWIIIGLVIAMAMSLLFIILL). The Cytoplasmic segment spans residues 254 to 256 (RFL). Residues 257–277 (AGIMVWVMIIMVILVLGYGIF) traverse the membrane as a helical segment. Over 278 to 315 (HCYMEYSRLRGEAGSDVSLVDLGFQTDFRVYLHLRQTW) the chain is Extracellular. Residues 316-336 (LAFMIILSILEVIIILLLIFL) form a helical membrane-spanning segment. Residues 337 to 364 (RKRILIAIALIKEASRAVGYVMCTMLYP) are Cytoplasmic-facing. A helical membrane pass occupies residues 365–385 (LVTFFLLCLCIAYWASTAVFL). Residues 386-440 (STSNEAVYKIFDDGLCPFTAKTCNPETFPSSNESRQCPNARCQFAFYGGESGYHR) are Extracellular-facing. A glycan (N-linked (GlcNAc...) asparagine) is linked at asparagine 417. Residues 441 to 461 (ALLGLQIFNAFMFFWLANFVL) traverse the membrane as a helical segment. At 462 to 504 (ALGQVTLAGAFASYYWALRKPDDLPAFPLFSAFGRALRYHTGS) the chain is on the cytoplasmic side. The chain crosses the membrane as a helical span at residues 505–525 (LAFGALILAIVQIIRVILEYL). Topologically, residues 526–563 (DQRLKAAENKFAKCLMTCLKCCFWCLEKFIKFLNRNAY) are extracellular. Residues 564 to 584 (IMIAIYGTNFCTSARNAFFLL) form a helical membrane-spanning segment. Over 585–599 (MRNIIRVAVLDKVTD) the chain is Cytoplasmic. Residues 600-620 (FLFLLGKLLIVGSVGILAFFF) form a helical membrane-spanning segment. At 621–638 (FTHRIRIVQDTAPPLNYY) the chain is on the extracellular side. Residues 639-659 (WVPILTVIVGSYLIAHGFFSV) traverse the membrane as a helical segment. Over 660–711 (YGMCVDTLFLCFCEDLERNDGSQERPYFMSPELRDILLKGSAEEGKRAEAEE) the chain is Cytoplasmic.

It belongs to the CTL (choline transporter-like) family. Interacts with COCH. N-glycosylated.

It is found in the cell membrane. Its subcellular location is the mitochondrion outer membrane. The enzyme catalyses choline(out) + n H(+)(in) = choline(in) + n H(+)(out). The catalysed reaction is ethanolamine(out) + n H(+)(in) = ethanolamine(in) + n H(+)(out). In terms of biological role, choline/H+ antiporter, mainly in mitochodria. Also acts as a low-affinity ethanolamine/H+ antiporter, regulating the supply of extracellular ethanolamine (Etn) for the CDP-Etn pathway, redistribute intracellular Etn and balance the CDP-Cho and CDP-Etn arms of the Kennedy pathway. The polypeptide is Choline transporter-like protein 2 (SLC44A2) (Pongo abelii (Sumatran orangutan)).